Consider the following 173-residue polypeptide: Sporulation-specific protein 12 (173 aa).

The span at 1–12 (MSNKASDQSART) shows a compositional bias: polar residues. Positions 1-56 (MSNKASDQSARTASILKTDITRENTITRSSSSNNDNYHHHNNINNYNESAKTGEDA) are disordered. S2 is modified (N-acetylserine). Phosphoserine is present on residues S118 and S125. The negative-charged tail stretch occupies residues 159–173 (DSEDVEIDEDEEYFY).

In terms of biological role, it is required for meiosis I chromosome division during sporulation. A component of the FEAR (CDC14 early anaphase release) network which promotes CDC14 release from the nucleolus during early anaphase. This chain is Sporulation-specific protein 12 (SPO12), found in Saccharomyces cerevisiae (strain ATCC 204508 / S288c) (Baker's yeast).